We begin with the raw amino-acid sequence, 528 residues long: Glucose-6-phosphate isomerase (528 aa).

The Proton donor role is filled by E322. Residues H351 and K455 contribute to the active site.

The protein belongs to the GPI family.

The protein resides in the cytoplasm. It carries out the reaction alpha-D-glucose 6-phosphate = beta-D-fructose 6-phosphate. Its pathway is carbohydrate biosynthesis; gluconeogenesis. It participates in carbohydrate degradation; glycolysis; D-glyceraldehyde 3-phosphate and glycerone phosphate from D-glucose: step 2/4. In terms of biological role, catalyzes the reversible isomerization of glucose-6-phosphate to fructose-6-phosphate. This Trichormus variabilis (strain ATCC 29413 / PCC 7937) (Anabaena variabilis) protein is Glucose-6-phosphate isomerase.